The chain runs to 132 residues: AP-2 complex subunit sigma (132 aa).

It belongs to the adaptor complexes small subunit family. As to quaternary structure, adaptor protein complex 2 (AP-2) is a heterotetramer composed of two large adaptins (alpha-type and beta-type subunits), a medium adaptin (mu-type subunit AP50) and a small adaptin (sigma-type subunit AP17). Widely expressed in the embryo, endosperm, leaf and root.

It localises to the cell membrane. It is found in the membrane. The protein localises to the coated pit. In terms of biological role, component of the adaptor complexes which link clathrin to receptors in coated vesicles. Clathrin-associated protein complexes are believed to interact with the cytoplasmic tails of membrane proteins, leading to their selection and concentration. AP2S1/AP17 is a subunit of the plasma membrane adaptor. The complex binds polyphosphoinositides. This chain is AP-2 complex subunit sigma (AP-17), found in Zea mays (Maize).